The following is a 339-amino-acid chain: Biotin synthase (339 aa).

The Radical SAM core domain maps to 55–282 (NAVQLSTLLS…KAVVRLSAGR (228 aa)). Residues cysteine 70, cysteine 74, and cysteine 77 each contribute to the [4Fe-4S] cluster site. [2Fe-2S] cluster is bound by residues cysteine 114, cysteine 145, cysteine 205, and arginine 277.

It belongs to the radical SAM superfamily. Biotin synthase family. Homodimer. [4Fe-4S] cluster is required as a cofactor. The cofactor is [2Fe-2S] cluster.

The enzyme catalyses (4R,5S)-dethiobiotin + (sulfur carrier)-SH + 2 reduced [2Fe-2S]-[ferredoxin] + 2 S-adenosyl-L-methionine = (sulfur carrier)-H + biotin + 2 5'-deoxyadenosine + 2 L-methionine + 2 oxidized [2Fe-2S]-[ferredoxin]. The protein operates within cofactor biosynthesis; biotin biosynthesis; biotin from 7,8-diaminononanoate: step 2/2. Its function is as follows. Catalyzes the conversion of dethiobiotin (DTB) to biotin by the insertion of a sulfur atom into dethiobiotin via a radical-based mechanism. The sequence is that of Biotin synthase from Burkholderia cenocepacia (strain ATCC BAA-245 / DSM 16553 / LMG 16656 / NCTC 13227 / J2315 / CF5610) (Burkholderia cepacia (strain J2315)).